Consider the following 559-residue polypeptide: Potassium-transporting ATPase potassium-binding subunit (559 aa).

The next 13 membrane-spanning stretches (helical) occupy residues 5–25 (GFLL…PLGS), 27–47 (LARL…RILW), 63–83 (LLAL…LLFW), 132–152 (GLTV…FALI), 170–190 (LVRI…LFFI), 253–273 (LAQM…FGEA), 283–303 (LLWA…WAEV), 327–347 (FGVL…CGAV), 356–376 (ALGG…FGGV), 379–399 (GLYG…LMIG), 416–436 (MTAL…ALAM), 484–504 (LLAF…MAIA), and 524–544 (GALF…LTFI).

Belongs to the KdpA family. The system is composed of three essential subunits: KdpA, KdpB and KdpC.

The protein localises to the cell inner membrane. Part of the high-affinity ATP-driven potassium transport (or Kdp) system, which catalyzes the hydrolysis of ATP coupled with the electrogenic transport of potassium into the cytoplasm. This subunit binds the periplasmic potassium ions and delivers the ions to the membrane domain of KdpB through an intramembrane tunnel. This is Potassium-transporting ATPase potassium-binding subunit from Salmonella enteritidis PT4 (strain P125109).